Here is a 590-residue protein sequence, read N- to C-terminus: Multidrug resistance ABC transporter ATP-binding and permease protein (590 aa).

6 helical membrane-spanning segments follow: residues Tyr-35–Val-55, Ile-79–Phe-99, Ile-150–Met-170, Leu-176–Gly-196, Val-261–Ile-281, and Leu-292–Phe-312. The 280-residue stretch at Phe-38–Lys-317 folds into the ABC transmembrane type-1 domain. The ABC transporter domain maps to Leu-349 to Glu-584. Gly-382–Ser-389 is a binding site for ATP.

The protein belongs to the ABC transporter superfamily. Multidrug exporter LmrA (TC 3.A.1.117.1) family. Homodimer.

It is found in the cell membrane. The enzyme catalyses ATP + H2O + xenobioticSide 1 = ADP + phosphate + xenobioticSide 2.. In terms of biological role, efflux transporter for a variety of amphiphilic cationic compounds, including antibiotics. This chain is Multidrug resistance ABC transporter ATP-binding and permease protein (lmrA), found in Lactococcus lactis subsp. lactis (strain IL1403) (Streptococcus lactis).